The following is a 437-amino-acid chain: Adenylosuccinate synthetase (437 aa).

GTP is bound by residues 25–31 (GDEGKGK), 53–55 (GHT), and Lys-62. Asp-26 functions as the Proton acceptor in the catalytic mechanism. Mg(2+) contacts are provided by Asp-26 and Gly-53. Residues 26–29 (DEGK) and 51–54 (NAGH) each bind IMP. Catalysis depends on His-54, which acts as the Proton donor. The IMP site is built by Thr-141, Arg-155, Asn-232, and Thr-247. Thr-307 lines the GTP pocket. Residue 307-313 (TTTKRPR) participates in substrate binding. Arg-311 lines the IMP pocket. GTP contacts are provided by residues Arg-313, 339–341 (KLD), and 425–427 (GVG).

It belongs to the adenylosuccinate synthetase family. In terms of assembly, homodimer. The cofactor is Mg(2+).

The protein localises to the cytoplasm. It carries out the reaction IMP + L-aspartate + GTP = N(6)-(1,2-dicarboxyethyl)-AMP + GDP + phosphate + 2 H(+). Its pathway is purine metabolism; AMP biosynthesis via de novo pathway; AMP from IMP: step 1/2. In terms of biological role, plays an important role in the salvage pathway for purine nucleotide biosynthesis. Catalyzes the first committed step in the biosynthesis of AMP from IMP. In Plasmodium knowlesi (strain H), this protein is Adenylosuccinate synthetase.